The chain runs to 369 residues: Small ribosomal subunit biogenesis GTPase RsgA (369 aa).

The 156-residue stretch at 116 to 271 folds into the CP-type G domain; the sequence is GEQLIAANLD…LIDNPGIREI (156 aa). GTP-binding positions include 161-164 and 213-221; these read NKID and GSSGVGKST. C294, C299, H301, and C307 together coordinate Zn(2+).

The protein belongs to the TRAFAC class YlqF/YawG GTPase family. RsgA subfamily. Monomer. Associates with 30S ribosomal subunit, binds 16S rRNA. Zn(2+) is required as a cofactor.

Its subcellular location is the cytoplasm. Functionally, one of several proteins that assist in the late maturation steps of the functional core of the 30S ribosomal subunit. Helps release RbfA from mature subunits. May play a role in the assembly of ribosomal proteins into the subunit. Circularly permuted GTPase that catalyzes slow GTP hydrolysis, GTPase activity is stimulated by the 30S ribosomal subunit. The chain is Small ribosomal subunit biogenesis GTPase RsgA from Methanosarcina acetivorans (strain ATCC 35395 / DSM 2834 / JCM 12185 / C2A).